The sequence spans 212 residues: Holliday junction branch migration complex subunit RuvA (212 aa).

Residues 1–66 (MISGLKGTLK…ERGQKLFGFL (66 aa)) are domain I. The segment at 67–145 (TEQDKEFFKV…KLELFLSGTS (79 aa)) is domain II. Residues 146-162 (KEPSISLSSFSETPEEA) are flexible linker. The segment at 163 to 212 (ALSRKREIAILGLVQLGFEEKTASKEVDKILKSSSPTDPGEIIREILKSL) is domain III.

Belongs to the RuvA family. In terms of assembly, homotetramer. Forms an RuvA(8)-RuvB(12)-Holliday junction (HJ) complex. HJ DNA is sandwiched between 2 RuvA tetramers; dsDNA enters through RuvA and exits via RuvB. An RuvB hexamer assembles on each DNA strand where it exits the tetramer. Each RuvB hexamer is contacted by two RuvA subunits (via domain III) on 2 adjacent RuvB subunits; this complex drives branch migration. In the full resolvosome a probable DNA-RuvA(4)-RuvB(12)-RuvC(2) complex forms which resolves the HJ.

Its subcellular location is the cytoplasm. Functionally, the RuvA-RuvB-RuvC complex processes Holliday junction (HJ) DNA during genetic recombination and DNA repair, while the RuvA-RuvB complex plays an important role in the rescue of blocked DNA replication forks via replication fork reversal (RFR). RuvA specifically binds to HJ cruciform DNA, conferring on it an open structure. The RuvB hexamer acts as an ATP-dependent pump, pulling dsDNA into and through the RuvAB complex. HJ branch migration allows RuvC to scan DNA until it finds its consensus sequence, where it cleaves and resolves the cruciform DNA. The chain is Holliday junction branch migration complex subunit RuvA from Leptospira borgpetersenii serovar Hardjo-bovis (strain JB197).